We begin with the raw amino-acid sequence, 195 residues long: Protein GrpE (195 aa).

This sequence belongs to the GrpE family. Homodimer.

The protein resides in the cytoplasm. Participates actively in the response to hyperosmotic and heat shock by preventing the aggregation of stress-denatured proteins, in association with DnaK and GrpE. It is the nucleotide exchange factor for DnaK and may function as a thermosensor. Unfolded proteins bind initially to DnaJ; upon interaction with the DnaJ-bound protein, DnaK hydrolyzes its bound ATP, resulting in the formation of a stable complex. GrpE releases ADP from DnaK; ATP binding to DnaK triggers the release of the substrate protein, thus completing the reaction cycle. Several rounds of ATP-dependent interactions between DnaJ, DnaK and GrpE are required for fully efficient folding. The protein is Protein GrpE of Francisella tularensis subsp. novicida (strain U112).